A 151-amino-acid polypeptide reads, in one-letter code: Ribonuclease H (151 aa).

An RNase H type-1 domain is found at 1–146; the sequence is MSDLFAYTDG…ADELARAGMA (146 aa). Aspartate 9, glutamate 52, aspartate 74, and aspartate 138 together coordinate Mg(2+).

This sequence belongs to the RNase H family. Monomer. Mg(2+) serves as cofactor.

It is found in the cytoplasm. The enzyme catalyses Endonucleolytic cleavage to 5'-phosphomonoester.. Its function is as follows. Endonuclease that specifically degrades the RNA of RNA-DNA hybrids. The chain is Ribonuclease H from Cereibacter sphaeroides (strain ATCC 17025 / ATH 2.4.3) (Rhodobacter sphaeroides).